The primary structure comprises 422 residues: L-threonine dehydratase biosynthetic IlvA (422 aa).

Lys-56 carries the N6-(pyridoxal phosphate)lysine modification. Pyridoxal 5'-phosphate contacts are provided by residues Asn-83, 189-193 (GGGGL), and Ser-315. An ACT-like domain is found at 339–413 (HYFILNFPQR…FDPSNIYINE (75 aa)).

Belongs to the serine/threonine dehydratase family. Homotetramer. It depends on pyridoxal 5'-phosphate as a cofactor.

The catalysed reaction is L-threonine = 2-oxobutanoate + NH4(+). The protein operates within amino-acid biosynthesis; L-isoleucine biosynthesis; 2-oxobutanoate from L-threonine: step 1/1. Functionally, catalyzes the anaerobic formation of alpha-ketobutyrate and ammonia from threonine in a two-step reaction. The first step involved a dehydration of threonine and a production of enamine intermediates (aminocrotonate), which tautomerizes to its imine form (iminobutyrate). Both intermediates are unstable and short-lived. The second step is the nonenzymatic hydrolysis of the enamine/imine intermediates to form 2-ketobutyrate and free ammonia. In the low water environment of the cell, the second step is accelerated by RidA. This is L-threonine dehydratase biosynthetic IlvA (ilvA) from Staphylococcus aureus (strain bovine RF122 / ET3-1).